The sequence spans 620 residues: Chaperone protein HscA homolog (620 aa).

The protein belongs to the heat shock protein 70 family.

Its function is as follows. Chaperone involved in the maturation of iron-sulfur cluster-containing proteins. Has a low intrinsic ATPase activity which is markedly stimulated by HscB. This Pseudomonas fluorescens (strain SBW25) protein is Chaperone protein HscA homolog.